Consider the following 168-residue polypeptide: Large ribosomal subunit protein uL10 (168 aa).

This sequence belongs to the universal ribosomal protein uL10 family. In terms of assembly, part of the ribosomal stalk of the 50S ribosomal subunit. The N-terminus interacts with L11 and the large rRNA to form the base of the stalk. The C-terminus forms an elongated spine to which L12 dimers bind in a sequential fashion forming a multimeric L10(L12)X complex.

Functionally, forms part of the ribosomal stalk, playing a central role in the interaction of the ribosome with GTP-bound translation factors. In Ralstonia pickettii (strain 12J), this protein is Large ribosomal subunit protein uL10.